A 524-amino-acid chain; its full sequence is GMP synthase [glutamine-hydrolyzing] (524 aa).

The region spanning Pro-7–Ser-196 is the Glutamine amidotransferase type-1 domain. The active-site Nucleophile is the Cys-84. Active-site residues include His-170 and Glu-172. One can recognise a GMPS ATP-PPase domain in the interval Trp-197 to Arg-398. Ser-224 to Ala-230 lines the ATP pocket.

Homodimer.

It catalyses the reaction XMP + L-glutamine + ATP + H2O = GMP + L-glutamate + AMP + diphosphate + 2 H(+). Its pathway is purine metabolism; GMP biosynthesis; GMP from XMP (L-Gln route): step 1/1. Functionally, catalyzes the synthesis of GMP from XMP. The chain is GMP synthase [glutamine-hydrolyzing] from Nocardia farcinica (strain IFM 10152).